The primary structure comprises 344 residues: Cathepsin B-like cysteine proteinase 5 (344 aa).

Positions 1 to 15 are cleaved as a signal peptide; it reads MWKLSAILLVAAASA. Residues 16-81 constitute a propeptide that is removed on maturation; that stretch reads VVIPGHREAP…DIVATEVSDA (66 aa). Cystine bridges form between cysteine 95–cysteine 124, cysteine 107–cysteine 154, cysteine 143–cysteine 213, cysteine 144–cysteine 150, cysteine 183–cysteine 217, and cysteine 191–cysteine 203. Cysteine 110 is an active-site residue. Catalysis depends on residues histidine 286 and asparagine 306.

The protein belongs to the peptidase C1 family.

This Caenorhabditis elegans protein is Cathepsin B-like cysteine proteinase 5 (cpr-5).